We begin with the raw amino-acid sequence, 312 residues long: Protein ABIL2 (312 aa).

A disordered region spans residues 173-287 (TIRETPPPPV…TEQQQPSKSK (115 aa)). Positions 183 to 199 (RKSTSQSSSPRQPPQRS) are enriched in low complexity. The segment covering 230 to 251 (SVATRKSASISRPTTPSKSRSI) has biased composition (polar residues). A compositionally biased stretch (basic and acidic residues) spans 269 to 279 (AFEKDNQKETE).

It belongs to the ABI family. As to quaternary structure, binds SCAR.

It is found in the cytoplasm. It localises to the cytoskeleton. Functionally, involved in regulation of actin and microtubule organization. Part of a WAVE complex that activates the Arp2/3 complex. The chain is Protein ABIL2 (ABIL2) from Arabidopsis thaliana (Mouse-ear cress).